We begin with the raw amino-acid sequence, 89 residues long: Small ribosomal subunit protein uS15 (89 aa).

This sequence belongs to the universal ribosomal protein uS15 family. In terms of assembly, part of the 30S ribosomal subunit. Forms a bridge to the 50S subunit in the 70S ribosome, contacting the 23S rRNA.

Functionally, one of the primary rRNA binding proteins, it binds directly to 16S rRNA where it helps nucleate assembly of the platform of the 30S subunit by binding and bridging several RNA helices of the 16S rRNA. Its function is as follows. Forms an intersubunit bridge (bridge B4) with the 23S rRNA of the 50S subunit in the ribosome. This chain is Small ribosomal subunit protein uS15, found in Shouchella clausii (strain KSM-K16) (Alkalihalobacillus clausii).